A 158-amino-acid chain; its full sequence is Ecotin (158 aa).

An N-terminal signal peptide occupies residues 1–21 (MRLLPLASVTLLSVLCAQAFA). An intrachain disulfide couples Cys67 to Cys104.

The protein belongs to the protease inhibitor I11 (ecotin) family. Homodimer.

It localises to the periplasm. General inhibitor of family S1 serine proteases. This is Ecotin from Pseudomonas fluorescens (strain ATCC BAA-477 / NRRL B-23932 / Pf-5).